Here is a 125-residue protein sequence, read N- to C-terminus: Cytochrome c2 (125 aa).

The signal sequence occupies residues 1–21; it reads MKAIKIAMVGAALVWSASAYA. The Cytochrome c domain maps to 23–123; it reads GDPVKGEQVF…DVIAFLATQH (101 aa). Heme c contacts are provided by cysteine 35, cysteine 38, histidine 39, and methionine 101.

Belongs to the cytochrome c family. Binds 1 heme c group covalently per subunit.

Its function is as follows. Cytochrome c2 is found mainly in purple, non-sulfur, photosynthetic bacteria where it functions as the electron donor to the oxidized bacteriochlorophyll in the photophosphorylation pathway. However, it may also have a role in the respiratory chain and is found in some non-photosynthetic bacteria. This Rhodomicrobium vannielii (strain ATCC 17100 / DSM 162 / LMG 4299 / NCIMB 10020 / ATH 3.1.1) protein is Cytochrome c2.